An 81-amino-acid chain; its full sequence is RNA-binding protein Hfq (81 aa).

The Sm domain occupies 10–69 (DPFLNTLRREHVPVSIYLVNGIKLQGQIESFDQYVVLLRNTVTQMVYKHAISTIVPGRAV).

Belongs to the Hfq family. In terms of assembly, homohexamer.

Its function is as follows. RNA chaperone that binds small regulatory RNA (sRNAs) and mRNAs to facilitate mRNA translational regulation in response to envelope stress, environmental stress and changes in metabolite concentrations. Also binds with high specificity to tRNAs. This chain is RNA-binding protein Hfq, found in Variovorax paradoxus (strain S110).